A 745-amino-acid chain; its full sequence is Copper-transporting ATPase (745 aa).

Positions 1 to 67 constitute an HMA domain; that stretch reads MKESFYIEGM…LIEKLGYSPK (67 aa). Over 1 to 83 the chain is Cytoplasmic; sequence MKESFYIEGM…KKEFFSPNVK (83 aa). Positions 12 and 15 each coordinate Cu cation. A helical membrane pass occupies residues 84–104; that stretch reads LALAVIFTLFVVYLSMGAMLS. Over 105-124 the chain is Extracellular; that stretch reads PSLLPESLLAINNHSNFLNA. A helical membrane pass occupies residues 125 to 144; sequence CLQLIGALIVMHLGRDFYIQ. Topologically, residues 145 to 151 are cytoplasmic; it reads GFKALWH. Residues 152-172 form a helical membrane-spanning segment; it reads RQPNMSSLIAIGTSAALISSL. The Extracellular segment spans residues 173 to 194; sequence WQLYLVYTNHYTDQWSYGHYYF. Residues 195 to 215 form a helical membrane-spanning segment; the sequence is ESVCVILMFVMVGKRIENVSK. Topologically, residues 216 to 343 are cytoplasmic; it reads DKALDAMQAL…KAEISRLADK (128 aa). Residues 344-366 form a helical membrane-spanning segment; it reads VSSVFVPSVIAIAILAFVVWLII. The Extracellular portion of the chain corresponds to 367 to 379; the sequence is APKPDFWWNFGIA. The helical transmembrane segment at 380-397 threads the bilayer; that stretch reads LEVFVSVLVISCPCALGL. Over 398–685 the chain is Cytoplasmic; the sequence is ATPMSILVAN…KLSQATIKNI (288 aa). The active-site 4-aspartylphosphate intermediate is Asp-435. Mg(2+) contacts are provided by Asp-631 and Asp-635. Residues 686–705 traverse the membrane as a helical segment; the sequence is KENLFWAFCYNSVFIPLACG. At 706–716 the chain is on the extracellular side; that stretch reads VLYKANIMLSP. Residues 717–735 form a helical membrane-spanning segment; that stretch reads AIAGLAMSLSSVSVVLNSQ. The Cytoplasmic portion of the chain corresponds to 736–745; sequence RLRNFKIKDH.

The protein belongs to the cation transport ATPase (P-type) (TC 3.A.3) family. Type IB subfamily.

It localises to the cell membrane. The catalysed reaction is Cu(2+)(in) + ATP + H2O = Cu(2+)(out) + ADP + phosphate + H(+). Its function is as follows. Probably involved in copper export. The protein is Copper-transporting ATPase (copA) of Helicobacter pylori (Campylobacter pylori).